The sequence spans 315 residues: Ribonuclease Z (315 aa).

Zn(2+) contacts are provided by His-61, His-63, Asp-65, His-66, His-151, Asp-219, and His-278. Asp-65 acts as the Proton acceptor in catalysis.

The protein belongs to the RNase Z family. As to quaternary structure, homodimer. It depends on Zn(2+) as a cofactor.

The enzyme catalyses Endonucleolytic cleavage of RNA, removing extra 3' nucleotides from tRNA precursor, generating 3' termini of tRNAs. A 3'-hydroxy group is left at the tRNA terminus and a 5'-phosphoryl group is left at the trailer molecule.. Zinc phosphodiesterase, which displays some tRNA 3'-processing endonuclease activity. Probably involved in tRNA maturation, by removing a 3'-trailer from precursor tRNA. This is Ribonuclease Z from Clostridium botulinum (strain Eklund 17B / Type B).